The chain runs to 130 residues: L-ectoine synthase (130 aa).

Belongs to the ectoine synthase family.

It carries out the reaction (2S)-4-acetamido-2-aminobutanoate = L-ectoine + H2O. It functions in the pathway amine and polyamine biosynthesis; ectoine biosynthesis; L-ectoine from L-aspartate 4-semialdehyde: step 3/3. In terms of biological role, catalyzes the circularization of gamma-N-acetyl-alpha,gamma-diaminobutyric acid (ADABA) to ectoine (1,4,5,6-tetrahydro-2-methyl-4-pyrimidine carboxylic acid), which is an excellent osmoprotectant. The chain is L-ectoine synthase from Desulfatibacillum aliphaticivorans.